The chain runs to 202 residues: LexA repressor (202 aa).

The segment at residues 28-48 (RAEIAQRLGFRSPNAAEEHLK) is a DNA-binding region (H-T-H motif). Residues S119 and K156 each act as for autocatalytic cleavage activity in the active site.

The protein belongs to the peptidase S24 family. As to quaternary structure, homodimer.

It carries out the reaction Hydrolysis of Ala-|-Gly bond in repressor LexA.. Represses a number of genes involved in the response to DNA damage (SOS response), including recA and lexA. Binds to the 16 bp palindromic sequence 5'-CTGTATATATATACAG-3'. In the presence of single-stranded DNA, RecA interacts with LexA causing an autocatalytic cleavage which disrupts the DNA-binding part of LexA, leading to derepression of the SOS regulon and eventually DNA repair. The polypeptide is LexA repressor (Klebsiella pneumoniae (strain 342)).